The following is a 466-amino-acid chain: ATP synthase subunit beta (466 aa).

Gly-153–Thr-160 serves as a coordination point for ATP.

The protein belongs to the ATPase alpha/beta chains family. In terms of assembly, F-type ATPases have 2 components, CF(1) - the catalytic core - and CF(0) - the membrane proton channel. CF(1) has five subunits: alpha(3), beta(3), gamma(1), delta(1), epsilon(1). CF(0) has three main subunits: a(1), b(2) and c(9-12). The alpha and beta chains form an alternating ring which encloses part of the gamma chain. CF(1) is attached to CF(0) by a central stalk formed by the gamma and epsilon chains, while a peripheral stalk is formed by the delta and b chains.

Its subcellular location is the cell membrane. It catalyses the reaction ATP + H2O + 4 H(+)(in) = ADP + phosphate + 5 H(+)(out). In terms of biological role, produces ATP from ADP in the presence of a proton gradient across the membrane. The catalytic sites are hosted primarily by the beta subunits. The protein is ATP synthase subunit beta of Leuconostoc citreum (strain KM20).